We begin with the raw amino-acid sequence, 405 residues long: Dynactin subunit 2 (405 aa).

The segment at 1–24 (MADPKYANLPGIASNEPDVYETSD) is disordered. Coiled coils occupy residues 102–125 (QQKYQRLVNEIHELCQDVEKIQTS) and 379–405 (QQTMKENLLAVEENFSALDQRMKKLNK).

This sequence belongs to the dynactin subunit 2 family. Subunit of dynactin, a multiprotein complex part of a tripartite complex with dynein and a adapter, such as BICDL1, BICD2 or HOOK3. The dynactin complex is built around ACTR1A/ACTB filament and consists of an actin-related filament composed of a shoulder domain, a pointed end and a barbed end. Its length is defined by its flexible shoulder domain. The soulder is composed of 2 DCTN1 subunits, 4 DCTN2 and 2 DCTN3.

Its subcellular location is the cytoplasm. The protein localises to the cytoskeleton. It is found in the microtubule organizing center. The protein resides in the centrosome. It localises to the membrane. Functionally, part of the dynactin complex that activates the molecular motor dynein for ultra-processive transport along microtubules. In the dynactin soulder domain, binds the ACTR1A filament and acts as a molecular ruler to determine the length. Modulates cytoplasmic dynein binding to an organelle, and plays a role in prometaphase chromosome alignment and spindle organization during mitosis. Involved in anchoring microtubules to centrosomes. The sequence is that of Dynactin subunit 2 (dctn2) from Danio rerio (Zebrafish).